The following is a 536-amino-acid chain: Zinc finger protein 623 (536 aa).

Residues 57–77 are disordered; that stretch reads GELLGNPEGQSLGSSPSQDRG. Residues 64-74 show a composition bias toward polar residues; the sequence is EGQSLGSSPSQ. C2H2-type zinc fingers lie at residues 123 to 145, 151 to 173, 179 to 201, 207 to 229, 235 to 257, 263 to 285, 291 to 313, 319 to 341, 347 to 369, 375 to 397, 403 to 425, 431 to 453, and 459 to 481; these read NPCD…RISH, YTCD…QRIH, YVCN…QRVH, FKCA…QRVH, FECK…QRIH, YECN…YQIH, YECK…QRIH, FECN…QRIH, YVCN…QRIH, YECN…QKIH, YECK…QKIH, FECK…QIIH, and YVCS…QKIH. Residue Lys445 forms a Glycyl lysine isopeptide (Lys-Gly) (interchain with G-Cter in SUMO2) linkage. Residues 513–536 are disordered; it reads LSLSKAPIHLGERSVDKGEHTGNL. Residues 522-536 are compositionally biased toward basic and acidic residues; that stretch reads LGERSVDKGEHTGNL.

The protein belongs to the krueppel C2H2-type zinc-finger protein family.

Its subcellular location is the nucleus. Functionally, may be involved in transcriptional regulation. This chain is Zinc finger protein 623 (ZNF623), found in Homo sapiens (Human).